A 716-amino-acid chain; its full sequence is MGCGGSSGASDPSSEKINWNNAEIHDEFKQEQKKAGAKRKAFDKTTGKAVEKERTAADREFDFFEGADAGSGEQFMAVRPYEGAIVEPAQHNEPSKDAPDVTYDLEYVYGYRAEDSRMNCFYNKNGNVCYFTAALGVVLDQDKNTQKFFGGGQTDNTSKMVARDDMYHTNDITAMDMSNCRTLCATGQNGSVPVAFVWDAATGAKKGRYKLDKGGREVTAIAIDPKKKYVAICANDNDHQLYIFDIDKGTQVKKDKSGPDRIFHMAWSLKDGDSVVATAGEKHFAIWNLGADSFKKKKGIYGDKGKPTSHSCVCWDDAGNAYSGGANSSIYVWSGQNLTSTYDVHGKGFVGAIRWCDGKIISGGKDGQIIISNPADGKAEKTIDVGELVRSVDMKGGKIVAGLRNGTILEIDSKGTKKEIMKSHSDGEAWGLAVADKDTFVTSGDDNKIYVWDLKNRKSTALAEICNEDKNSKAGGASSLTEYAPSKCGRSVAVNVGGNGNVAVGHNDGRVTIRGGVKSIDKVTKTLTDSGEWIECMAYSPDGSMLAVGSHDNNIYIYSSADYSKLGTLKAHNSFIVSLDWSSDGTYIRSVCGAHELLFFTVEDFKQDPSGATNTVETTWHTNSAKYGWLVSGIFPAGTDGTHINHVDFSSSGSLIVTADDYGLVNVWRNPARAGATPVSLRGHSEHVVRTYFTQGESYILSIGGYDKTIMQWKKK.

The disordered stretch occupies residues 1–53 (MGCGGSSGASDPSSEKINWNNAEIHDEFKQEQKKAGAKRKAFDKTTGKAVEKE). The span at 8–21 (GASDPSSEKINWNN) shows a compositional bias: polar residues. Residues 23–53 (EIHDEFKQEQKKAGAKRKAFDKTTGKAVEKE) are compositionally biased toward basic and acidic residues. WD repeat units lie at residues 167–208 (YHTN…KKGR), 213–254 (KGGR…QVKK), 257–297 (SGPD…FKKK), 305–343 (GKPTSHSCVCWDDAGNAYSGGANSSIYVWSGQNLTSTYD), 345–382 (HGKGFVGAIRWCDGKIISGGKDGQIIISNPADGKAEKT), 424–462 (HSDGEAWGLAVADKDTFVTSGDDNKIYVWDLKNRKSTAL), 529–568 (DSGEWIECMAYSPDGSMLAVGSHDNNIYIYSSADYSKLGT), 571–610 (AHNSFIVSLDWSSDGTYIRSVCGAHELLFFTVEDFKQDPS), 639–678 (TDGTHINHVDFSSSGSLIVTADDYGLVNVWRNPARAGATP), and 683–715 (GHSEHVVRTYFTQGESYILSIGGYDKTIMQWKK).

This sequence belongs to the WD repeat EMAP family.

The chain is Ciliary WD repeat-containing protein ctxp80 from Euplotoides octocarinatus (Freshwater ciliate).